The chain runs to 406 residues: MSAPKKVVLAYSGGLDTSIILKWLQTEYDCEVVTFTADLGQGEELEPARAKAEMMGASAIYIEDLREEFVRDFVFPMFRANAVYEGLYLLGTSIARPLISKRLVEIAEAEGADAVAHGATGKGNDQVRFELAAYALNPDIKVIAPWREWDLSSRTKLIDFAEKHQIPIAKDKRGEAPFSVDANLLHTSSEGKVLEDPAEDAPDYVYQRTVNPEDAPNTPEYIEVGFERGDAVSINGEAMSPATVLTKLNELGGAHGIGRLDLVEGRFVGMKSRGIYETPGGTILLEAHRGIEQITLDRGAAHLKDELMPRYAELIYNGFWFSPEREMLQAAIDASQAHVTGTVRLKLYKGSVRTVGRWSDHSLYSEAHVTFEDDAGAYDQKDAAGFIQLNALRLKLLAARNKRLGK.

ATP-binding positions include 10–18 (AYSGGLDTS) and alanine 37. 2 residues coordinate L-citrulline: tyrosine 88 and serine 93. Residue glycine 118 coordinates ATP. L-aspartate contacts are provided by threonine 120, asparagine 124, and aspartate 125. Asparagine 124 contacts L-citrulline. The L-citrulline site is built by arginine 128, serine 179, serine 188, glutamate 264, and tyrosine 276.

This sequence belongs to the argininosuccinate synthase family. Type 1 subfamily. As to quaternary structure, homotetramer.

The protein localises to the cytoplasm. The catalysed reaction is L-citrulline + L-aspartate + ATP = 2-(N(omega)-L-arginino)succinate + AMP + diphosphate + H(+). It functions in the pathway amino-acid biosynthesis; L-arginine biosynthesis; L-arginine from L-ornithine and carbamoyl phosphate: step 2/3. This is Argininosuccinate synthase from Dinoroseobacter shibae (strain DSM 16493 / NCIMB 14021 / DFL 12).